The primary structure comprises 537 residues: Chaperonin GroEL 2 (537 aa).

Residues 29 to 32 (TLGP), 86 to 90 (DGTTT), Gly-412, and Asp-495 contribute to the ATP site.

Belongs to the chaperonin (HSP60) family. Forms a cylinder of 14 subunits composed of two heptameric rings stacked back-to-back. Interacts with the co-chaperonin GroES.

It localises to the cytoplasm. It catalyses the reaction ATP + H2O + a folded polypeptide = ADP + phosphate + an unfolded polypeptide.. Its function is as follows. Together with its co-chaperonin GroES, plays an essential role in assisting protein folding. The GroEL-GroES system forms a nano-cage that allows encapsulation of the non-native substrate proteins and provides a physical environment optimized to promote and accelerate protein folding. The polypeptide is Chaperonin GroEL 2 (Paenarthrobacter aurescens (strain TC1)).